Consider the following 332-residue polypeptide: Adenosine deaminase (332 aa).

Histidine 12 and histidine 14 together coordinate Zn(2+). 3 residues coordinate substrate: histidine 14, aspartate 16, and glycine 170. Histidine 197 is a Zn(2+) binding site. The Proton donor role is filled by glutamate 200. Aspartate 278 is a binding site for Zn(2+). Aspartate 279 serves as a coordination point for substrate.

It belongs to the metallo-dependent hydrolases superfamily. Adenosine and AMP deaminases family. Adenosine deaminase subfamily. The cofactor is Zn(2+).

It catalyses the reaction adenosine + H2O + H(+) = inosine + NH4(+). The enzyme catalyses 2'-deoxyadenosine + H2O + H(+) = 2'-deoxyinosine + NH4(+). Functionally, catalyzes the hydrolytic deamination of adenosine and 2-deoxyadenosine. This chain is Adenosine deaminase, found in Serratia proteamaculans (strain 568).